A 563-amino-acid polypeptide reads, in one-letter code: Membrane protein insertase YidC (563 aa).

Residues 1–21 (MDIKRTILIVALAIVTYVGVL) traverse the membrane as a helical segment. Residues 43-62 (APGIPDTAAGTNGSASADVP) form a disordered region. 5 helical membrane-spanning segments follow: residues 344–364 (LELT…FWLL), 370–390 (ILGN…GLFF), 440–460 (LGGC…YWVL), 471–491 (WILW…PIIM), and 518–538 (PIIF…YWVV).

The protein belongs to the OXA1/ALB3/YidC family. Type 1 subfamily. Interacts with the Sec translocase complex via SecD. Specifically interacts with transmembrane segments of nascent integral membrane proteins during membrane integration.

The protein localises to the cell inner membrane. Its function is as follows. Required for the insertion and/or proper folding and/or complex formation of integral membrane proteins into the membrane. Involved in integration of membrane proteins that insert both dependently and independently of the Sec translocase complex, as well as at least some lipoproteins. Aids folding of multispanning membrane proteins. The sequence is that of Membrane protein insertase YidC from Pseudomonas syringae pv. syringae (strain B728a).